A 664-amino-acid chain; its full sequence is Protein-arginine deiminase type-3 (664 aa).

It belongs to the protein arginine deiminase family. The cofactor is Ca(2+). In terms of tissue distribution, epidermis and hair follicles.

The protein localises to the cytoplasm. It carries out the reaction L-arginyl-[protein] + H2O = L-citrullyl-[protein] + NH4(+). Catalyzes the deimination of arginine residues of proteins. This chain is Protein-arginine deiminase type-3 (Padi3), found in Mus musculus (Mouse).